We begin with the raw amino-acid sequence, 359 residues long: 4-galactosyl-N-acetylglucosaminide 3-alpha-L-fucosyltransferase 9 (359 aa).

Residues 1–11 (MTSASKGILRP) lie on the Cytoplasmic side of the membrane. Residues 12–32 (FLIVCIILACSMVCLFIYIKP) traverse the membrane as a helical; Signal-anchor for type II membrane protein segment. The Lumenal portion of the chain corresponds to 33 to 359 (TNSWIFSPME…VGNLEKWFWN (327 aa)). Asparagine 62 carries N-linked (GlcNAc...) asparagine glycosylation. The interval 63-168 (ETTILIWVWP…RRDSDIQVPY (106 aa)) is acceptor-binding. Glutamine 75 provides a ligand contact to a beta-D-galactosyl-(1-&gt;4)-N-acetyl-beta-D-glucosaminyl derivative. Intrachain disulfides connect cysteine 82/cysteine 335, cysteine 91/cysteine 338, and cysteine 190/cysteine 238. N-linked (GlcNAc...) asparagine glycosylation occurs at asparagine 101. Position 137 (glutamate 137) interacts with a beta-D-galactosyl-(1-&gt;4)-N-acetyl-beta-D-glucosaminyl derivative. The active-site Nucleophile is the glutamate 137. Glutamate 137 contributes to the GDP-beta-L-fucose binding site. Residue asparagine 153 is glycosylated (N-linked (GlcNAc...) asparagine). GDP-beta-L-fucose contacts are provided by tyrosine 168, valine 192, serine 194, asparagine 195, arginine 202, valine 226, tyrosine 241, asparagine 246, tyrosine 252, glutamate 255, and lysine 256. The tract at residues 169-326 (GFLTVSTNPF…NWRKDFTVNL (158 aa)) is donor-binding. Positions 327-359 (PRFWESHACLACDHVKRHQEYKSVGNLEKWFWN) are acceptor-binding.

Belongs to the glycosyltransferase 10 family. Homodimer. N-glycosylated with complex-type N-glycans.

Its subcellular location is the golgi apparatus. It is found in the trans-Golgi network membrane. The protein localises to the golgi apparatus membrane. It carries out the reaction a beta-D-galactosyl-(1-&gt;4)-N-acetyl-beta-D-glucosaminyl derivative + GDP-beta-L-fucose = a beta-D-galactosyl-(1-&gt;4)-[alpha-L-fucosyl-(1-&gt;3)]-N-acetyl-beta-D-glucosaminyl derivative + GDP + H(+). The catalysed reaction is an alpha-Neu5Ac-(2-&gt;3)-beta-D-Gal-(1-&gt;4)-beta-D-GlcNAc-(1-&gt;3)-beta-D-Gal-(1-&gt;4)-beta-D-GlcNAc derivative + GDP-beta-L-fucose = an alpha-Neu5Ac-(2-&gt;3)-beta-D-Gal-(1-&gt;4)-beta-D-GlcNAc-(1-&gt;3)-beta-D-Gal-(1-&gt;4)-[alpha-L-Fuc-(1-&gt;3)]-beta-D-GlcNAc derivative + GDP + H(+). It catalyses the reaction alpha-N-glycoloylneuraminosyl-(2-&gt;3)-beta-D-galactosyl-(1-&gt;4)-N-acetyl-beta-D-glucosaminyl-(1-&gt;3)-beta-D-galactosyl-(1-&gt;4)-N-acetyl-beta-D-glucosaminyl-(1-&gt;3)-beta-D-galactosyl-(1-&gt;4)-beta-D-glucosyl-(1&lt;-&gt;1')-ceramide + GDP-beta-L-fucose = alpha-N-glycoloylneuraminosyl-(2-&gt;3)-beta-D-galactosyl-(1-&gt;4)-N-acetyl-beta-D-glucosaminyl-(1-&gt;3)-beta-D-galactosyl-(1-&gt;4)-[alpha-L-fucosyl-(1-&gt;3)]-N-acetyl-beta-D-glucosaminyl-(1-&gt;3)-beta-D-galactosyl-(1-&gt;4)-beta-D-glucosyl-(1&lt;-&gt;1')-ceramide + GDP + H(+). The enzyme catalyses alpha-D-galactosyl-(1-&gt;3)-beta-D-galactosyl-(1-&gt;4)-N-acetyl-beta-D-glucosaminyl-(1-&gt;3)-beta-D-galactosyl-(1-&gt;4)-beta-D-glucosyl-(1&lt;-&gt;1')-ceramide + GDP-beta-L-fucose = a neolactoside IV(3)-alpha-Gal,III(3)-alpha-Fuc-nLc4Cer + GDP + H(+). It carries out the reaction a neolactoside nLc4Cer + GDP-beta-L-fucose = a neolactoside III(3)-alpha-Fuc-nLc4Cer + GDP + H(+). The catalysed reaction is an N-acetyl-alpha-neuraminyl-(2-&gt;3)-beta-D-galactosyl-(1-&gt;4)-N-acetyl-beta-D-glucosaminyl derivative + GDP-beta-L-fucose = an alpha-Neu5Ac-(2-&gt;3)-beta-D-Gal-(1-&gt;4)-[alpha-L-Fuc-(1-&gt;3)]-beta-D-GlcNAc derivative + GDP + H(+). It catalyses the reaction beta-D-Gal-(1-&gt;4)-beta-D-GlcNAc-(1-&gt;3)-beta-D-Gal-(1-&gt;4)-D-Glc + GDP-beta-L-fucose = beta-D-Gal-(1-&gt;4)-[alpha-L-Fuc-(1-&gt;3)]-beta-D-GlcNAc-(1-&gt;3)-beta-D-Gal-(1-&gt;4)-D-Glc + GDP + H(+). The enzyme catalyses an alpha-L-Fuc-(1-&gt;2)-beta-D-Gal-(1-&gt;4)-beta-D-GlcNAc derivative + GDP-beta-L-fucose = an alpha-L-Fuc-(1-&gt;2)-beta-D-Gal-(1-&gt;4)-[alpha-L-Fuc-(1-&gt;3)]-beta-D-GlcNAc derivative + GDP + H(+). It participates in protein modification; protein glycosylation. The protein operates within glycolipid biosynthesis. With respect to regulation, activated by Mn2+. Its function is as follows. Catalyzes alpha(1-&gt;3) linkage of fucosyl moiety transferred from GDP-beta-L-fucose to N-acetyl glucosamine (GlcNAc) within type 2 lactosamine (LacNAc, beta-D-Gal-(1-&gt;4)-beta-D-GlcNAc-) glycan attached to glycolipids and N- or O-linked glycoproteins. Fucosylates distal type 2 LacNAc and its fucosylated (H-type 2 LacNAc) and sialylated (sialyl-type 2 LacNAc) derivatives to form Lewis x (Lex) (CD15) and Lewis y (Ley) antigenic epitopes involved in cell adhesion and differentiation. Generates Lex epitopes in the brain, presumably playing a role in the maintenance of neuronal stemness and neurite outgrowth in progenitor neural cells. Fucosylates the internal type 2 LacNAc unit of the polylactosamine chain to form VIM-2 antigen that serves as recognition epitope for SELE. Can also modify milk oligosaccharides in particular type 2 tetrasaccharide LNnT. This Bos taurus (Bovine) protein is 4-galactosyl-N-acetylglucosaminide 3-alpha-L-fucosyltransferase 9.